A 165-amino-acid chain; its full sequence is E3 ubiquitin-protein ligase RNF181 (165 aa).

The segment at 88 to 129 adopts an RING-type; atypical zinc-finger fold; that stretch reads CPVCLLEFEEEETVIEMPCHHLFHSNCILPWLSKTNSCPLCR. A disordered region spans residues 136–165; sequence DDSYEEHKKDKARRQQQQHRLENLHGAMYT. At threonine 165 the chain carries Phosphothreonine.

Belongs to the RNF181 family. In terms of assembly, directly interacts with ITGA2B and, as a result, with integrin ITGA2B/ITGB3. There is no evidence that integrin ITGA2B/ITGB3 is an endogenous substrate for RNF181-directed ubiquitination. In terms of processing, auto-ubiquitinated as part of the enzymatic reaction.

The catalysed reaction is S-ubiquitinyl-[E2 ubiquitin-conjugating enzyme]-L-cysteine + [acceptor protein]-L-lysine = [E2 ubiquitin-conjugating enzyme]-L-cysteine + N(6)-ubiquitinyl-[acceptor protein]-L-lysine.. Its pathway is protein modification; protein ubiquitination. In terms of biological role, E3 ubiquitin-protein ligase which accepts ubiquitin from an E2 ubiquitin-conjugating enzyme in the form of a thioester and then directly transfers the ubiquitin to targeted substrates. Catalyzes monoubiquitination of 26S proteasome subunit PSMC2/RPT1. The sequence is that of E3 ubiquitin-protein ligase RNF181 (Rnf181) from Rattus norvegicus (Rat).